A 296-amino-acid chain; its full sequence is 4-hydroxy-tetrahydrodipicolinate synthase (296 aa).

Thr49 provides a ligand contact to pyruvate. Residue Tyr137 is the Proton donor/acceptor of the active site. Lys166 serves as the catalytic Schiff-base intermediate with substrate. Ile208 is a binding site for pyruvate.

This sequence belongs to the DapA family. In terms of assembly, homotetramer; dimer of dimers.

The protein localises to the cytoplasm. The catalysed reaction is L-aspartate 4-semialdehyde + pyruvate = (2S,4S)-4-hydroxy-2,3,4,5-tetrahydrodipicolinate + H2O + H(+). It participates in amino-acid biosynthesis; L-lysine biosynthesis via DAP pathway; (S)-tetrahydrodipicolinate from L-aspartate: step 3/4. In terms of biological role, catalyzes the condensation of (S)-aspartate-beta-semialdehyde [(S)-ASA] and pyruvate to 4-hydroxy-tetrahydrodipicolinate (HTPA). The chain is 4-hydroxy-tetrahydrodipicolinate synthase from Chlorobaculum parvum (strain DSM 263 / NCIMB 8327) (Chlorobium vibrioforme subsp. thiosulfatophilum).